We begin with the raw amino-acid sequence, 196 residues long: uncharacterized protein (196 aa).

Residues 26–46 form a helical membrane-spanning segment; that stretch reads ITFFFILLICFICILLLLAIF.

It is found in the membrane. This is an uncharacterized protein from Mus musculus (Mouse).